We begin with the raw amino-acid sequence, 202 residues long: Small ribosomal subunit protein uS4c (202 aa).

One can recognise an S4 RNA-binding domain in the interval 90–158; that stretch reads MRSDNVIFRL…ISKNIELYQK (69 aa).

Belongs to the universal ribosomal protein uS4 family. As to quaternary structure, part of the 30S ribosomal subunit. Contacts protein S5. The interaction surface between S4 and S5 is involved in control of translational fidelity.

It localises to the plastid. The protein resides in the chloroplast. Functionally, one of the primary rRNA binding proteins, it binds directly to 16S rRNA where it nucleates assembly of the body of the 30S subunit. With S5 and S12 plays an important role in translational accuracy. In Anthoceros punctatus (Hornwort), this protein is Small ribosomal subunit protein uS4c (rps4).